The following is a 470-amino-acid chain: MRDYIPKYLNAFLLAFATFAVGFAIFIAKDSNSSSHLYFSTSSSLWTSSFSPAFITVSIFLTVHRFREKRKRNGSNPGSGYWKRDGKVEAELATARVLIREAQLNYSSTTSSPLGDEDYVPHGDIYRNPYAFHRSYLLMEKMFKIYVYEEGDPPIFHYGLCKDIYSMEGLFLNFMENDVLKYRTRDPDKAHVYFLPFSVVMILHHLFDPVVRDKAVLERVIADYVQIISKKYPYWNTSDGFDHFMLSCHDWGHRATWYVKKLFFNSIRVLCNANISEYFNPEKDAPFPEINLLTGDINNLTGGLDPISRTTLAFFAGKSHGKIRPVLLNHWKEKDKDILVYENLPDGLDYTEMMRKSRFCICPSGHEVASPRVPEAIYSGCVPVLISENYVLPFSDVLNWEKFSVSVSVKEIPELKRILMDIPEERYMRLYEGVKKVKRHILVNDPPKRYDVFNMIIHSIWLRRLNVKLL.

Topologically, residues 1–7 are cytoplasmic; sequence MRDYIPK. Residues 8–28 form a helical; Signal-anchor membrane-spanning segment; sequence YLNAFLLAFATFAVGFAIFIA. Residues 29-470 are Lumenal-facing; sequence KDSNSSSHLY…WLRRLNVKLL (442 aa). N-linked (GlcNAc...) asparagine glycosylation is found at N32, N73, N105, N236, N274, and N299.

This sequence belongs to the glycosyltransferase 47 family.

The protein localises to the golgi apparatus membrane. Functionally, may be involved in cell wall biosynthesis. In Arabidopsis thaliana (Mouse-ear cress), this protein is Probable glycosyltransferase At3g07620.